The chain runs to 84 residues: ORF8b protein (84 aa).

Residues 1–82 (MCLKILVRYN…RDVLVVLNKR (82 aa)) form the SARS ORF8 Ig-like domain. A disulfide bridge connects residues Cys22 and Cys40.

It is found in the host cytoplasm. The protein localises to the host nucleus. In terms of biological role, non-structural protein which is dispensable for virus replication in cell culture. The polypeptide is ORF8b protein (Severe acute respiratory syndrome coronavirus (SARS-CoV)).